A 474-amino-acid chain; its full sequence is Protein anachronism (474 aa).

The N-terminal stretch at Met1 to Ala33 is a signal peptide. N-linked (GlcNAc...) asparagine glycans are attached at residues Asn54, Asn62, Asn73, Asn116, and Asn144. Positions Asn173–Pro195 are disordered. The span at Gly183–Pro195 shows a compositional bias: polar residues. Asn342 carries N-linked (GlcNAc...) asparagine glycosylation. Polar residues predominate over residues Phe359–Asn372. Residues Phe359–Glu474 are disordered. Basic residues-rich tracts occupy residues Leu390–His400 and Asn437–Glu474.

In terms of tissue distribution, synthesized in some glial cells and secreted.

It is found in the secreted. In terms of biological role, negatively regulates proliferation of neuronal precursor cells, thereby controlling the timing of postembryonic neurogenesis. In Drosophila melanogaster (Fruit fly), this protein is Protein anachronism (ana).